Reading from the N-terminus, the 316-residue chain is Pantothenate kinase (316 aa).

95-102 (GSVAVGKS) lines the ATP pocket.

The protein belongs to the prokaryotic pantothenate kinase family.

The protein localises to the cytoplasm. It catalyses the reaction (R)-pantothenate + ATP = (R)-4'-phosphopantothenate + ADP + H(+). The protein operates within cofactor biosynthesis; coenzyme A biosynthesis; CoA from (R)-pantothenate: step 1/5. This is Pantothenate kinase from Hamiltonella defensa subsp. Acyrthosiphon pisum (strain 5AT).